The chain runs to 294 residues: N-acetylmuramic acid 6-phosphate etherase (294 aa).

In terms of domain architecture, SIS spans 56–219 (TSYSLKNGGR…STLSMVSVGK (164 aa)). Catalysis depends on E84, which acts as the Proton donor. E115 is an active-site residue.

The protein belongs to the GCKR-like family. MurNAc-6-P etherase subfamily. In terms of assembly, homodimer.

It catalyses the reaction N-acetyl-D-muramate 6-phosphate + H2O = N-acetyl-D-glucosamine 6-phosphate + (R)-lactate. The protein operates within amino-sugar metabolism; 1,6-anhydro-N-acetylmuramate degradation. It functions in the pathway amino-sugar metabolism; N-acetylmuramate degradation. It participates in cell wall biogenesis; peptidoglycan recycling. In terms of biological role, specifically catalyzes the cleavage of the D-lactyl ether substituent of MurNAc 6-phosphate, producing GlcNAc 6-phosphate and D-lactate. Together with AnmK, is also required for the utilization of anhydro-N-acetylmuramic acid (anhMurNAc) either imported from the medium or derived from its own cell wall murein, and thus plays a role in cell wall recycling. The polypeptide is N-acetylmuramic acid 6-phosphate etherase (Francisella tularensis subsp. novicida (strain U112)).